Here is a 111-residue protein sequence, read N- to C-terminus: Cornifelin homolog B (111 aa).

It belongs to the cornifelin family.

This is Cornifelin homolog B (cnfn-b) from Xenopus laevis (African clawed frog).